A 189-amino-acid chain; its full sequence is Thioredoxin-like protein CITRX, chloroplastic (189 aa).

The transit peptide at 1 to 56 directs the protein to the chloroplast; sequence MAMAAAASLLPASAAPTLPGRAFRPPRNSTPTASLSCDGGSRCRGVGLGVILGGCR. The region spanning 72 to 189 is the Thioredoxin domain; it reads GSGKYIAPDY…MIRNIIDNEL (118 aa). Residues cysteine 112 and cysteine 115 each act as nucleophile in the active site. Cysteine 112 and cysteine 115 are joined by a disulfide.

This sequence belongs to the thioredoxin family. Plant CITRX-type subfamily.

It localises to the plastid. It is found in the chloroplast. Functionally, probable thiol-disulfide oxidoreductase that may play a role in proper chloroplast development. The protein is Thioredoxin-like protein CITRX, chloroplastic of Oryza sativa subsp. japonica (Rice).